The following is a 182-amino-acid chain: MQTEHVILLNAQGVPTGTLEKYAAHTADTLLHLAFSSWLFNAKGQLLVTRRALSKKAWPGVCTNSVCGHPQLGESNEDAVIRRCRYELGVEITPPESIYPDFRYRATDPSGIVENEVCPVFAARTTSALQINDDEVMDYQWCDLADVLHGIDATPWAFSPWMVMQAANSEARKLLSAFAQHN.

The Mn(2+) site is built by His25 and His32. A Nudix hydrolase domain is found at 30–164 (LLHLAFSSWL…PWAFSPWMVM (135 aa)). Cys67 is a catalytic residue. Residue His69 participates in Mn(2+) binding. Glu87 is a Mg(2+) binding site. Mn(2+) is bound by residues Glu114 and Glu116. Glu116 is a catalytic residue.

This sequence belongs to the IPP isomerase type 1 family. In terms of assembly, homodimer. Requires Mg(2+) as cofactor. Mn(2+) serves as cofactor.

It is found in the cytoplasm. The enzyme catalyses isopentenyl diphosphate = dimethylallyl diphosphate. It functions in the pathway isoprenoid biosynthesis; dimethylallyl diphosphate biosynthesis; dimethylallyl diphosphate from isopentenyl diphosphate: step 1/1. Functionally, catalyzes the 1,3-allylic rearrangement of the homoallylic substrate isopentenyl (IPP) to its highly electrophilic allylic isomer, dimethylallyl diphosphate (DMAPP). The polypeptide is Isopentenyl-diphosphate Delta-isomerase (Escherichia coli O9:H4 (strain HS)).